Consider the following 1114-residue polypeptide: M-phase phosphoprotein 9 (1114 aa).

Disordered regions lie at residues 1–55, 106–161, 183–207, 267–301, and 410–468; these read MEDF…KTGP, RPSC…DCHV, AKEP…VVQA, TSWA…WKPP, and VLEP…STIP. The segment covering 24 to 51 has biased composition (polar residues); it reads APQSLGLSLHANRSSPHLSTNGVSSFSG. Positions 106 to 119 are enriched in low complexity; sequence RPSCSSSSVSEQVS. The segment covering 149 to 161 has biased composition (polar residues); sequence QPASSTSYPDCHV. Polar residues-rich tracts occupy residues 267–280 and 429–446; these read TSWA…QSKQ and HNPS…TTRA. The interval 368 to 729 is required for its centrosomal localization; sequence LSQVLTLDPG…EAQVKQAEHE (362 aa). The segment at 382-431 is interaction with CEP97; it reads KPKEHVAGIQAHGFLHALDDRISFSPDSVLEPSLSRHSDTDSSSQASHNP. Residues 574 to 733 are a coiled coil; the sequence is DRCGQLDSAL…KQAEHESMLS (160 aa). Phosphoserine; by TTBK2 is present on S710. K713 is covalently cross-linked (Glycyl lysine isopeptide (Lys-Gly) (interchain with G-Cter in ubiquitin)). A Phosphoserine; by TTBK2 modification is found at S717. 3 disordered regions span residues 727–755, 840–931, and 975–1002; these read EHES…TSDV, SWGT…GFSH, and EEKK…NGLK. The segment at 730–963 is interaction with KIF24; sequence SMLSLRNGAK…PVSTLQQTTA (234 aa). Polar residues predominate over residues 852-868; it reads SKLVNSRQTEPSVNTGR. The span at 881–898 shows a compositional bias: low complexity; the sequence is QTSASQRSSSLPPSSRKA. Residue S926 is modified to Phosphoserine. Residues 975–985 are compositionally biased toward basic and acidic residues; the sequence is EEKKYSEKNSD. Positions 1040–1105 form a coiled coil; it reads RTLAETERFF…GSVRMTLKKF (66 aa).

In terms of assembly, interacts with CCP110, CEP97 and KIF24. Post-translationally, TTBK2-mediated phosphorylation at Ser-710 and Ser-717, promotes its ubiquitination at Lys-713 leading to proteasomal degradation, loss of MPHOSPH9 facilitates the removal of the CP110-CEP97 complex from the mother centrioles, promoting the initiation of ciliogenesis. Phosphorylated in M (mitotic) phase. Ubiquitinated at Lys-713, leading to proteasomal degradation.

It is found in the cytoplasm. Its subcellular location is the cytoskeleton. The protein localises to the microtubule organizing center. It localises to the centrosome. The protein resides in the centriole. It is found in the golgi apparatus membrane. Negatively regulates cilia formation by recruiting the CP110-CEP97 complex (a negative regulator of ciliogenesis) at the distal end of the mother centriole in ciliary cells. At the beginning of cilia formation, MPHOSPH9 undergoes TTBK2-mediated phosphorylation and degradation via the ubiquitin-proteasome system and removes itself and the CP110-CEP97 complex from the distal end of the mother centriole, which subsequently promotes cilia formation. The chain is M-phase phosphoprotein 9 (Mphosph9) from Mus musculus (Mouse).